We begin with the raw amino-acid sequence, 437 residues long: Protein PhoH2 (437 aa).

Residues 7–134 form the PINc domain; the sequence is RTYVLDTSVL…LVSKDIPLRV (128 aa).

It in the N-terminal section; belongs to the PINc/VapC protein family. The protein in the C-terminal section; belongs to the PhoH family. In terms of assembly, interacts with antitoxin PhoAT. The cofactor is Mg(2+).

The catalysed reaction is n ATP + n H2O + wound RNA = n ADP + n phosphate + unwound RNA.. The enzyme catalyses ATP + H2O = ADP + phosphate + H(+). It catalyses the reaction GTP + H2O = GDP + phosphate + H(+). Toxic component of a type II toxin-antitoxin (TA) system. The possible cognate antitoxin is PhoAT; the toxin gene can be expressed in the absence of the antitoxin gene in an endogenous mc(2)155 double deletion. Unwinds and/or cleaves 5'-tailed RNA in vitro that starts with 5'-AC, the reaction requires hydrolyzable ATP; double-stranded (ds)RNA and dsDNA are not unwound or cleaved. Has ATPase and GTPase activities. This is Protein PhoH2 from Mycolicibacterium smegmatis (strain ATCC 700084 / mc(2)155) (Mycobacterium smegmatis).